We begin with the raw amino-acid sequence, 212 residues long: Methylthioribulose-1-phosphate dehydratase (212 aa).

Positions 97 and 99 each coordinate Zn(2+).

It belongs to the aldolase class II family. MtnB subfamily. In terms of assembly, homotetramer. The cofactor is Zn(2+).

The enzyme catalyses 5-(methylsulfanyl)-D-ribulose 1-phosphate = 5-methylsulfanyl-2,3-dioxopentyl phosphate + H2O. Its pathway is amino-acid biosynthesis; L-methionine biosynthesis via salvage pathway; L-methionine from S-methyl-5-thio-alpha-D-ribose 1-phosphate: step 2/6. In terms of biological role, catalyzes the dehydration of methylthioribulose-1-phosphate (MTRu-1-P) into 2,3-diketo-5-methylthiopentyl-1-phosphate (DK-MTP-1-P). The protein is Methylthioribulose-1-phosphate dehydratase of Bacillus thuringiensis subsp. konkukian (strain 97-27).